The following is a 198-amino-acid chain: Phosphoheptose isomerase (198 aa).

The SIS domain occupies Ile-34–Gly-196. Residue Asn-49–Gly-51 coordinates substrate. Residues His-58 and Asn-62 each coordinate Zn(2+). Residues Asn-62, Asn-91–Asp-92, Ser-117–Ser-119, Ser-122, and Gln-172 contribute to the substrate site. Zn(2+) contacts are provided by Gln-172 and His-180.

It belongs to the SIS family. GmhA subfamily. As to quaternary structure, homotetramer. Requires Zn(2+) as cofactor.

Its subcellular location is the cytoplasm. It catalyses the reaction 2 D-sedoheptulose 7-phosphate = D-glycero-alpha-D-manno-heptose 7-phosphate + D-glycero-beta-D-manno-heptose 7-phosphate. The protein operates within carbohydrate biosynthesis; D-glycero-D-manno-heptose 7-phosphate biosynthesis; D-glycero-alpha-D-manno-heptose 7-phosphate and D-glycero-beta-D-manno-heptose 7-phosphate from sedoheptulose 7-phosphate: step 1/1. Catalyzes the isomerization of sedoheptulose 7-phosphate in D-glycero-D-manno-heptose 7-phosphate. This chain is Phosphoheptose isomerase, found in Alteromonas mediterranea (strain DSM 17117 / CIP 110805 / LMG 28347 / Deep ecotype).